The sequence spans 1116 residues: cGMP-specific 3',5'-cyclic phosphodiesterase (1116 aa).

Disordered stretches follow at residues M1–A36 and K82–Q136. Low complexity predominate over residues V15–S28. The segment covering H86–Q136 has biased composition (polar residues). GAF domains are found at residues D241–I393 and N425–I611. A PDEase domain is found at S641 to V964. Catalysis depends on H717, which acts as the Proton donor. 4 residues coordinate a divalent metal cation: H721, H757, D758, and D868. Disordered regions lie at residues Q1005–K1031 and H1067–L1116. Composition is skewed to basic and acidic residues over residues E1014–R1023 and H1067–S1076. Low complexity predominate over residues S1085–V1103. Basic residues predominate over residues S1106–L1116. C1113 carries the post-translational modification Cysteine methyl ester. C1113 carries S-farnesyl cysteine lipidation. Residues A1114–L1116 constitute a propeptide, removed in mature form.

The protein belongs to the cyclic nucleotide phosphodiesterase family. Interacts with PrBP. The cofactor is a divalent metal cation.

It localises to the cell membrane. It catalyses the reaction 3',5'-cyclic GMP + H2O = GMP + H(+). Functionally, has a role regulating cGMP transport in Malpighian tubule principal cells. The polypeptide is cGMP-specific 3',5'-cyclic phosphodiesterase (Drosophila mojavensis (Fruit fly)).